The following is a 313-amino-acid chain: Small ribosomal subunit protein uS2 (313 aa).

Ser-2 is modified (N-acetylserine). 2 laminin-binding regions span residues 161–180 (IPCNNKGHHSVGLMWWMLAR) and 205–229 (RDPEEIEKEEQAAAEKAVGKEEFQG). [DE]-W-[ST] repeat units lie at residues 230–232 (EWS) and 245–247 (DWS). Residues 242 to 313 (EVADWSEGVA…DWGGTTSDWS (72 aa)) form a laminin-binding region. The segment covering 262-274 (PATAAAAAAAAPP) has biased composition (low complexity). Residues 262–313 (PATAAAAAAAAPPVKTGEVFSEDWSTQPATDDWSTAPTAQASDWGGTTSDWS) form a disordered region. 3 [DE]-W-[ST] repeats span residues 284 to 286 (DWS), 293 to 295 (DWS), and 311 to 313 (DWS). Polar residues predominate over residues 284–313 (DWSTQPATDDWSTAPTAQASDWGGTTSDWS).

Belongs to the universal ribosomal protein uS2 family. Monomer (37LRP) and homodimer (67LR). Component of the small ribosomal subunit. Mature ribosomes consist of a small (40S) and a large (60S) subunit. The 40S subunit contains about 33 different proteins and 1 molecule of RNA (18S). The 60S subunit contains about 49 different proteins and 3 molecules of RNA (28S, 5.8S and 5S). Interacts with rps21. Interacts with several laminins including at least lamb1. Interacts with mdk. Acylated. Acylation may be a prerequisite for conversion of the monomeric 37 kDa laminin receptor precursor (37LRP) to the mature dimeric 67 kDa laminin receptor (67LR), and may provide a mechanism for membrane association. Post-translationally, cleaved by stromelysin-3 (ST3) at the cell surface. Cleavage by stromelysin-3 may be a mechanism to alter cell-extracellular matrix interactions.

Its subcellular location is the cell membrane. The protein resides in the cytoplasm. The protein localises to the nucleus. In terms of biological role, required for the assembly and/or stability of the 40S ribosomal subunit. Required for the processing of the 20S rRNA-precursor to mature 18S rRNA in a late step of the maturation of 40S ribosomal subunits. Also functions as a cell surface receptor for laminin. Plays a role in cell adhesion to the basement membrane and in the consequent activation of signaling transduction pathways. May play a role in cell fate determination and tissue morphogenesis. The sequence is that of Small ribosomal subunit protein uS2 (rpsa) from Solea senegalensis (Senegalese sole).